Consider the following 1059-residue polypeptide: Transmembrane protease serine 9 (1059 aa).

Residues 1–29 (MEPTVADVHLVPRTTKEVPALDAACCRAA) lie on the Cytoplasmic side of the membrane. Residues 30–50 (SIGVVATSLVVLTLGVLLAFL) traverse the membrane as a helical; Signal-anchor for type II membrane protein segment. The Extracellular portion of the chain corresponds to 51-1059 (STQGFHVDHT…RGWIGQHIQE (1009 aa)). One can recognise an LDL-receptor class A domain in the interval 153–190 (RCPGNSFSCGNSQCVTKVNPECDDQEDCSDGSDEAHCE). 4 disulfides stabilise this stretch: Cys-154-Cys-166, Cys-161-Cys-180, Cys-174-Cys-189, and Cys-228-Cys-244. The Peptidase S1 1 domain maps to 203–436 (IVGGMEASPG…LRDWILEATT (234 aa)). Catalysis depends on charge relay system residues His-243 and Asp-292. 3 disulfide bridges follow: Cys-326–Cys-393, Cys-358–Cys-372, and Cys-383–Cys-412. The active-site Charge relay system is Ser-387. Residues 443 to 469 (APTMAPAPAAPSTAWPTSPESPVVSTP) form a disordered region. Positions 504–736 (VVGGFGAASG…LKGWILEIMS (233 aa)) constitute a Peptidase S1 2 domain. A disulfide bridge links Cys-529 with Cys-545. His-544 (charge relay system) is an active-site residue. N-linked (GlcNAc...) asparagine glycosylation is present at Asn-547. Residue Asp-592 is the Charge relay system of the active site. 3 disulfides stabilise this stretch: Cys-626–Cys-693, Cys-658–Cys-672, and Cys-683–Cys-712. Asn-638 and Asn-663 each carry an N-linked (GlcNAc...) asparagine glycan. Ser-687 (charge relay system) is an active-site residue. The tract at residues 758–814 (TTAGLTVPGATPSRPTPGAASRVTGQPANSTLSAVSTTARGQTPFPDAPEATTHTQL) is disordered. Polar residues predominate over residues 780–798 (VTGQPANSTLSAVSTTARG). N-linked (GlcNAc...) asparagine glycosylation occurs at Asn-786. The region spanning 827–1058 (IVGGSAAGRG…VRGWIGQHIQ (232 aa)) is the Peptidase S1 3 domain. 4 cysteine pairs are disulfide-bonded: Cys-853-Cys-869, Cys-949-Cys-1015, Cys-980-Cys-994, and Cys-1005-Cys-1034.

The protein belongs to the peptidase S1 family. Proteolytically cleaved to generate 3 independent serine protease chains. The cleaved chains may remain attached to the membrane thanks to disulfide bonds. It is unclear whether cleavage always takes place. In terms of tissue distribution, expressed in fetal human tissues, such as kidney, liver, lung and brain, and in a variety of tumor cell lines. Weakly expressed in adult tissues including skeletal muscle, liver, placenta and heart.

It is found in the cell membrane. Inhibited by serine protease inhibitors PMSF and 4-(2-aminoethyl)benzenesulfonyl fluoride, but not by EDTA. Serase-1 and serase-2 are serine proteases that hydrolyze the peptides N-t-Boc-Gln-Ala-Arg-AMC and N-t-Boc-Gln-Gly-Arg-AMC. In contrast, N-t-Boc-Ala-Phe-Lys-AMC and N-t-Boc-Ala-Pro-Ala-AMC are not significantly hydrolyzed. This is Transmembrane protease serine 9 (TMPRSS9) from Homo sapiens (Human).